The primary structure comprises 373 residues: MLIPLSMKNCFRLLCQHKVPAAGFKSPPTHGLILQSISNDVYENLAFEDWIHDHIHLEGKPILFLWRNSPSVVIGRHQNPWQECNLHLMRQEGIKLARRKSGGGAVYHDMGNINLTFFTTKTKYDRMENLKLIVRALNAVQPQLDVQPTKKFDLLLDGQFKISGTASKIGRTAAYHHCTLLCSTNRTALSSSLKSPYCGIKSNATPSIPSAVKNLLERDSTLTCEVLMSAVAAEYAAHHQVDGHVNLINPADETMFPGINRKVKELQSWEWVYGRTPKFTVDTTFHVPYEQAHLEIQVFMDVKNGRIETCAIKAPDHWLPLEIGEKLNSSFIGSKFCPVETTLLTNVLLRTCPGDHHLHSKWYILCEKIRGIM.

The N-terminal 25 residues, 1–25, are a transit peptide targeting the mitochondrion; it reads MLIPLSMKNCFRLLCQHKVPAAGFK. Residues 57-243 enclose the BPL/LPL catalytic domain; it reads LEGKPILFLW…EYAAHHQVDG (187 aa). (R)-lipoyl-5'-AMP-binding residues include Tyr107, Lys151, Lys161, and Thr179.

Belongs to the LplA family.

The protein resides in the mitochondrion. The enzyme catalyses (R)-lipoyl-5'-AMP + L-lysyl-[lipoyl-carrier protein] = N(6)-[(R)-lipoyl]-L-lysyl-[lipoyl-carrier protein] + AMP + 2 H(+). It carries out the reaction N(6)-[(R)-lipoyl]-L-lysyl-[glycine-cleavage complex H protein] + L-lysyl-[lipoyl-carrier protein] = L-lysyl-[glycine-cleavage complex H protein] + N(6)-[(R)-lipoyl]-L-lysyl-[lipoyl-carrier protein]. It participates in protein modification; protein lipoylation via exogenous pathway; protein N(6)-(lipoyl)lysine from lipoate: step 2/2. Functionally, lipoyl amidotransferase that catalyzes the transfer of lipoyl moieties from lipoyl-protein H of the glycine cleavage system (lipoyl-GCSH) to E2 subunits of the pyruvate dehydrogenase complex (PDCE2). Unable to catalyze the transfer of octanoyl from octanoyl-GCSH to PDCE2. In vitro, it is also able to catalyze the transfer of the lipoyl group from lipoyl-AMP to the specific lysine residue of lipoyl domains of lipoate-dependent enzymes but this reaction may not be physiologically relevant. This is Lipoyl amidotransferase LIPT1, mitochondrial from Mus musculus (Mouse).